Reading from the N-terminus, the 342-residue chain is Anthranilate phosphoribosyltransferase (342 aa).

Residues G74, 77–78, T82, 84–87, 101–109, and S113 contribute to the 5-phospho-alpha-D-ribose 1-diphosphate site; these read GD, NVST, and KHGNRSVSG. G74 lines the anthranilate pocket. Position 86 (S86) interacts with Mg(2+). N104 provides a ligand contact to anthranilate. R159 provides a ligand contact to anthranilate. 2 residues coordinate Mg(2+): D218 and E219.

This sequence belongs to the anthranilate phosphoribosyltransferase family. As to quaternary structure, homodimer. Mg(2+) serves as cofactor.

The catalysed reaction is N-(5-phospho-beta-D-ribosyl)anthranilate + diphosphate = 5-phospho-alpha-D-ribose 1-diphosphate + anthranilate. The protein operates within amino-acid biosynthesis; L-tryptophan biosynthesis; L-tryptophan from chorismate: step 2/5. Functionally, catalyzes the transfer of the phosphoribosyl group of 5-phosphorylribose-1-pyrophosphate (PRPP) to anthranilate to yield N-(5'-phosphoribosyl)-anthranilate (PRA). The sequence is that of Anthranilate phosphoribosyltransferase from Sulfolobus acidocaldarius (strain ATCC 33909 / DSM 639 / JCM 8929 / NBRC 15157 / NCIMB 11770).